A 232-amino-acid polypeptide reads, in one-letter code: LRRN4 C-terminal-like protein (232 aa).

The signal sequence occupies residues 1–22; it reads MPHSPCLLWLLAVTSLVPGTQP. Topologically, residues 23–189 are extracellular; sequence LVAGDLEGDE…RLTVPPRPLT (167 aa). The 96-residue stretch at 77–172 folds into the Fibronectin type-III domain; it reads PPHPPRLGEV…GAEGLDSADG (96 aa). Asn-127 is a glycosylation site (N-linked (GlcNAc...) asparagine). The chain crosses the membrane as a helical span at residues 190-210; sequence LLHAAMGVGSALALLSCSALV. The Cytoplasmic portion of the chain corresponds to 211–232; the sequence is WHFCLRQRWGCPRRGRPSHAGL.

It localises to the membrane. This Bos taurus (Bovine) protein is LRRN4 C-terminal-like protein (LRRN4CL).